Consider the following 278-residue polypeptide: MQVRQSIHSDHAKQLDTAGLRREFLIEKIFAADDYTMTYSHIDRIIVGGILPVSKAVSIGNEVGKQLGVSYFLERRELGAINIGGPGLIVVDGQTYEIGNEEALYVGKGAKEVKFSSIDRANPAKFYYNSAPAHTTYPNKKITLAEASPQTLGDDATSNRRTINKYIVPDVLPTCQLSMGLTKLAPGSLWNTMPCHTHERRMEVYFYFDMDEETAVFHMMGQPQETRHLLVHNEQAVISPSWSIHSGVGTKRYTFIWGMVGENQVFGDMDHIAVSELR.

H196, H198, E203, and H245 together coordinate Zn(2+).

Belongs to the KduI family. Zn(2+) is required as a cofactor.

It carries out the reaction 5-dehydro-4-deoxy-D-glucuronate = 3-deoxy-D-glycero-2,5-hexodiulosonate. Its pathway is glycan metabolism; pectin degradation; 2-dehydro-3-deoxy-D-gluconate from pectin: step 4/5. In terms of biological role, catalyzes the isomerization of 5-dehydro-4-deoxy-D-glucuronate to 3-deoxy-D-glycero-2,5-hexodiulosonate. This Yersinia pseudotuberculosis serotype O:1b (strain IP 31758) protein is 4-deoxy-L-threo-5-hexosulose-uronate ketol-isomerase.